A 208-amino-acid polypeptide reads, in one-letter code: UPF0711 protein C18orf21 homolog (208 aa).

Residues 123-137 (SKHKSTPGSASKHRT) are compositionally biased toward basic residues. 2 disordered regions span residues 123–180 (SKHK…KSSP) and 189–208 (MLENKQQGKKGGLKDFLSSL). The span at 138–152 (PQTVNWATPKSVANR) shows a compositional bias: polar residues. The segment covering 153-180 (TPSSTPRSASSNTSSSSSSKSSSVKSSP) has biased composition (low complexity).

Belongs to the UPF0711 family.

This is UPF0711 protein C18orf21 homolog from Danio rerio (Zebrafish).